The primary structure comprises 468 residues: UDP-N-acetylmuramoyl-L-alanine--L-glutamate ligase (468 aa).

An ATP-binding site is contributed by 122–128 (GTKGKST).

Belongs to the MurCDEF family. MurD2 subfamily.

The protein localises to the cytoplasm. It carries out the reaction UDP-N-acetyl-alpha-D-muramoyl-L-alanine + L-glutamate + ATP = UDP-N-acetyl-alpha-D-muramoyl-L-alanyl-L-glutamate + ADP + phosphate + H(+). Its pathway is cell wall biogenesis; peptidoglycan biosynthesis. Cell wall formation. Catalyzes the addition of L-glutamate to the nucleotide precursor UDP-N-acetylmuramoyl-L-alanine. The chain is UDP-N-acetylmuramoyl-L-alanine--L-glutamate ligase from Xylella fastidiosa (strain Temecula1 / ATCC 700964).